Reading from the N-terminus, the 141-residue chain is Hemoglobin subunit alpha-1/2 (141 aa).

The region spanning 1-141 (VLSPADKANV…VGTVLTSKYR (141 aa)) is the Globin domain. S3 is subject to Phosphoserine. 2 positions are modified to N6-succinyllysine: K7 and K11. At K16 the chain carries N6-acetyllysine; alternate. An N6-succinyllysine; alternate modification is found at K16. Y24 is modified (phosphotyrosine). S35 is modified (phosphoserine). N6-succinyllysine is present on K40. Phosphoserine is present on S49. An O2-binding site is contributed by H58. Heme b is bound at residue H87. Phosphoserine is present on S102. At T108 the chain carries Phosphothreonine. 2 positions are modified to phosphoserine: S124 and S131. Phosphothreonine occurs at positions 134 and 137. S138 carries the post-translational modification Phosphoserine.

This sequence belongs to the globin family. In terms of assembly, heterotetramer of two alpha chains and two beta chains. As to expression, red blood cells.

In terms of biological role, involved in oxygen transport from the lung to the various peripheral tissues. This chain is Hemoglobin subunit alpha-1/2, found in Macroderma gigas (Australian ghost bat).